The following is an 879-amino-acid chain: Probable phospholipid transport protein YdbH (879 aa).

Residues 1 to 6 lie on the Cytoplasmic side of the membrane; that stretch reads MLGKYK. Residues 7 to 29 form a helical membrane-spanning segment; sequence AVLALLLLIILVPLTLLMTLGLW. The Periplasmic portion of the chain corresponds to 30–879; the sequence is VPTLAGIWLP…PQGKECEEKQ (850 aa).

Interacts with the outer membrane lipoprotein YnbE.

It is found in the cell inner membrane. Involved in outer membrane lipid homeostasis. Interacts with the outer membrane lipoprotein YnbE to form a functional protein bridge connecting the inner and outer membranes of the cell. Likely transports phospholipids between the inner membrane and the outer membrane. It would provide a bridge-like structure that protects phospholipids as they travel across the periplasm. Functionally, tamB, YdbH and YhdP are redundant, but not equivalent, in performing an essential function for growth and maintaining lipid homeostasis in the outer membrane. Any of these three proteins is sufficient for growth. The chain is Probable phospholipid transport protein YdbH (ydbH) from Escherichia coli (strain K12).